The primary structure comprises 147 residues: UPF0179 protein MTH_609 (147 aa).

It belongs to the UPF0179 family.

The protein is UPF0179 protein MTH_609 of Methanothermobacter thermautotrophicus (strain ATCC 29096 / DSM 1053 / JCM 10044 / NBRC 100330 / Delta H) (Methanobacterium thermoautotrophicum).